The following is a 386-amino-acid chain: Putative aminotransferase YugH (386 aa).

At Lys-234 the chain carries N6-(pyridoxal phosphate)lysine.

Belongs to the class-I pyridoxal-phosphate-dependent aminotransferase family. Pyridoxal 5'-phosphate is required as a cofactor.

Its subcellular location is the cytoplasm. This is Putative aminotransferase YugH (yugH) from Bacillus subtilis (strain 168).